Consider the following 602-residue polypeptide: Basic-leucine zipper transcription factor B (602 aa).

Residues 1-10 (MNQFYQSTTG) are compositionally biased toward polar residues. Residues 1–128 (MNQFYQSTTG…NRVNQNLASR (128 aa)) are disordered. Low complexity-rich tracts occupy residues 11 to 54 (GQQN…TSTS) and 66 to 102 (QQQI…YNGD). Residues 58-94 (KNKDNQSKQQQIQQQQIQQQQQQQQQQQQQIQQQSVD) are a coiled coil. One can recognise a bZIP domain in the interval 113 to 176 (ENKKNRNRVN…GVEIMKPDPA (64 aa)). The basic motif stretch occupies residues 115-135 (KKNRNRVNQNLASRNYRQRKK). The interval 138-145 (IKEIEEKL) is leucine-zipper. 2 disordered regions span residues 328–401 (TNLS…QNNN) and 525–602 (QNQT…PSRQ). 3 stretches are compositionally biased toward low complexity: residues 336-350 (PNPT…TQST), 358-401 (LTLL…QNNN), and 525-592 (QNQT…SSPY). Residues 509–552 (TFSQQTQQLQQAQLQLQNQTKQQQQQLQNNNNNNNNNNNNNNSF) adopt a coiled-coil conformation. Residues 593-602 (NHHQQQPSRQ) are compositionally biased toward polar residues.

The protein belongs to the bZIP family. Binds DNA as a dimer. Heterodimerizes with dimA; in vitro. Also able to form homodimer; in vitro.

The protein resides in the nucleus. In terms of biological role, transcriptional regulator involved in DIF-1 signaling. DIF-1 (Differentiation Inducing Factor-1) is a signal molecule involved in the differentiation of pstO (prestalk-O) cells. May be a direct activator of ecmA. This chain is Basic-leucine zipper transcription factor B (dimB), found in Dictyostelium discoideum (Social amoeba).